Reading from the N-terminus, the 927-residue chain is Disks large homolog 1 (927 aa).

Residues 4 to 64 (RKQDTQRALH…FYEVTLLDNP (61 aa)) form the L27 domain. The residue at position 115 (threonine 115) is a Phosphothreonine. Phosphoserine occurs at positions 122, 138, and 158. The segment at 162-212 (PTEAVPPSSPTVPVIPVLPVPAENTVILPTIPQANPPPVLVNTDSLETSTY) is interaction with SH3 domains. The tract at residues 224-546 (EITLERGNSG…QAVTIVAQYR (323 aa)) is required for interaction with MARCHF2. PDZ domains lie at 230-317 (GNSG…SEKI), 325-412 (GPKG…YMND), and 474-555 (TGLG…RFEA). At serine 232 the chain carries Phosphoserine. Tyrosine 399 carries the phosphotyrosine modification. Residues serine 568, serine 573, serine 575, serine 579, serine 598, serine 619, serine 707, serine 710, and serine 857 each carry the phosphoserine modification. The region spanning 581-651 (KRSLYVRALF…PSKRRVEKKE (71 aa)) is the SH3 domain. In terms of domain architecture, Guanylate kinase-like spans 683–858 (RKFPFYKNKD…ISIFIKPKSM (176 aa)). Positions 691–719 (KDQSEQETSDADQHITSNASDSESSYRGQ) are disordered. A compositionally biased stretch (polar residues) spans 704–717 (HITSNASDSESSYR).

It belongs to the MAGUK family. In terms of assembly, homotetramer. Interacts (via guanylate kinase-like domain) with DLGAP1, DLGAP2, DLGAP3, DLGAP4 and MAP1A. Interacts (via guanylate kinase-like domain) with KIF13B. May interact with HTR2A. Interacts (via PDZ domains) with GRIA1. Interacts (via PDZ domains) with GRIN2A. Interacts (via PDZ domains) with KCND2 and KCND3. Interacts (via PDZ domains) with KCNA1, KCNA2, KCNA3 and KCNA4. Interacts (via PDZ domains) with ADGRA3. Interacts with KCNF1. Interacts with CAMK2. Interacts with cytoskeleton-associated protein EPB41. Interacts with cytoskeleton-associated protein EZR. Found in a complex with KCNA5 and CAV3. Found in a complex with APC and CTNNB1. Interacts (via PDZ domains) with APC. Interacts with CDH1 through binding to PIK3R1. Forms multiprotein complexes with CASK, LIN7A, LIN7B, LIN7C, APBA1, and KCNJ12. Interacts with TOPK. Forms a tripartite complex composed of DLG1, MPP7 and LIN7 (LIN7A or LIN7C). May interact with TJAP1. Interacts with PTEN. Interacts with FRMPD4 (via C-terminus). Interacts with LRFN1, LRFN2 and LRFN4. Interacts with SFPQ. Interacts (via PDZ domains) with ADGRA2 (via PDZ-binding motif). Interacts with ADAM10; this interaction recruits ADAM10 to the cell membrane during long-term depression in hippocampal neurons. Interacts with DGKI (via PDZ-binding motif). Interacts (via PDZ domains) with MARCHF2 (via PDZ domain); the interaction leads to DLG1 ubiqtuitination and degradation. Interacts (via N-terminus) with MPP3; this interaction connects CADM1 with DLG1 and links CADM1 with the regulatory subunit of phosphoinositide-3-kinase (PI3K) by forming a multiprotein complex and participates in cell spreading. In terms of processing, phosphorylated by MAPK12. Phosphorylation of Ser-232 regulates association with GRIN2A. Post-translationally, ubiquitinated; by MARCHF2 which results in its degradation.

It is found in the cell membrane. Its subcellular location is the basolateral cell membrane. The protein resides in the endoplasmic reticulum membrane. It localises to the postsynaptic density. The protein localises to the synapse. It is found in the sarcolemma. Its subcellular location is the apical cell membrane. The protein resides in the cell junction. It localises to the cytoplasm. Essential multidomain scaffolding protein required for normal development. Recruits channels, receptors and signaling molecules to discrete plasma membrane domains in polarized cells. Promotes epithelial cell layer barrier function via maintaining cell-cell adhesion. May also play a role in adherens junction assembly, signal transduction, cell proliferation, synaptogenesis and lymphocyte activation. Regulates the excitability of cardiac myocytes by modulating the functional expression of Kv4 channels. Functional regulator of Kv1.5 channel. During long-term depression in hippocampal neurons, it recruits ADAM10 to the plasma membrane. This is Disks large homolog 1 (DLG1) from Canis lupus familiaris (Dog).